The sequence spans 222 residues: MTLLQPDKIILRQLGLQPYEPVSQAMHNFTDRRTETTPDELWLVQHQPVFTQGQAGKAEHLLMPGDIPVVQSDRGGQVTYHGPGQQVMYVMIDLKRNKVGVRQLVTAIEDTVINTLAHFHIESRARPDAPGVYVGEQKICSLGLRIRKGSSFHGLALNVAMDLSPFQRINPCGYAGMQMAQVSALAPGVGIEDVHPVLVQEFVHLLGYPKVELRNWNLHDYE.

Positions 35 to 210 (ETTPDELWLV…EFVHLLGYPK (176 aa)) constitute a BPL/LPL catalytic domain. Residues 74–81 (RGGQVTYH), 141–143 (SLG), and 154–156 (GLA) contribute to the substrate site. The active-site Acyl-thioester intermediate is the cysteine 172.

It belongs to the LipB family.

The protein localises to the cytoplasm. It carries out the reaction octanoyl-[ACP] + L-lysyl-[protein] = N(6)-octanoyl-L-lysyl-[protein] + holo-[ACP] + H(+). It participates in protein modification; protein lipoylation via endogenous pathway; protein N(6)-(lipoyl)lysine from octanoyl-[acyl-carrier-protein]: step 1/2. Catalyzes the transfer of endogenously produced octanoic acid from octanoyl-acyl-carrier-protein onto the lipoyl domains of lipoate-dependent enzymes. Lipoyl-ACP can also act as a substrate although octanoyl-ACP is likely to be the physiological substrate. This chain is Octanoyltransferase, found in Serratia proteamaculans (strain 568).